We begin with the raw amino-acid sequence, 445 residues long: RNA pseudouridine synthase 2, chloroplastic (445 aa).

The N-terminal 44 residues, Met-1 to Asn-44, are a transit peptide targeting the chloroplast. Residues Ala-47–Pro-66 are disordered. One can recognise an S4 RNA-binding domain in the interval Ser-72–Asp-147. Asp-235 is a catalytic residue.

This sequence belongs to the pseudouridine synthase RluA family.

The protein localises to the plastid. Its subcellular location is the chloroplast. It carries out the reaction a uridine in RNA = a pseudouridine in RNA. The polypeptide is RNA pseudouridine synthase 2, chloroplastic (Oryza sativa subsp. japonica (Rice)).